A 499-amino-acid chain; its full sequence is Lysine--tRNA ligase (499 aa).

The Mg(2+) site is built by E408 and E415.

The protein belongs to the class-II aminoacyl-tRNA synthetase family. As to quaternary structure, homodimer. The cofactor is Mg(2+).

It localises to the cytoplasm. It carries out the reaction tRNA(Lys) + L-lysine + ATP = L-lysyl-tRNA(Lys) + AMP + diphosphate. This chain is Lysine--tRNA ligase, found in Bacillus cereus (strain B4264).